The sequence spans 448 residues: Asparagine--tRNA ligase (448 aa).

This sequence belongs to the class-II aminoacyl-tRNA synthetase family. As to quaternary structure, homodimer.

It is found in the cytoplasm. The catalysed reaction is tRNA(Asn) + L-asparagine + ATP = L-asparaginyl-tRNA(Asn) + AMP + diphosphate + H(+). The sequence is that of Asparagine--tRNA ligase from Streptococcus agalactiae serotype Ia (strain ATCC 27591 / A909 / CDC SS700).